Here is a 201-residue protein sequence, read N- to C-terminus: Holliday junction branch migration complex subunit RuvA (201 aa).

A domain I region spans residues 1 to 63; it reads MIAFVSGTVA…EDSLTLYGFA (63 aa). Residues 64 to 139 form a domain II region; sequence DDDERQVFEL…RLGEPIGAPA (76 aa). Residues 139–143 form a flexible linker region; it reads AVGAP. The domain III stretch occupies residues 144 to 201; the sequence is VSTGWRDQLHAALIGLGYATREADEAVSAVAPQAEAAGGTPQVGALLKAALQTLNRAR.

This sequence belongs to the RuvA family. As to quaternary structure, homotetramer. Forms an RuvA(8)-RuvB(12)-Holliday junction (HJ) complex. HJ DNA is sandwiched between 2 RuvA tetramers; dsDNA enters through RuvA and exits via RuvB. An RuvB hexamer assembles on each DNA strand where it exits the tetramer. Each RuvB hexamer is contacted by two RuvA subunits (via domain III) on 2 adjacent RuvB subunits; this complex drives branch migration. In the full resolvosome a probable DNA-RuvA(4)-RuvB(12)-RuvC(2) complex forms which resolves the HJ.

It localises to the cytoplasm. Functionally, the RuvA-RuvB-RuvC complex processes Holliday junction (HJ) DNA during genetic recombination and DNA repair, while the RuvA-RuvB complex plays an important role in the rescue of blocked DNA replication forks via replication fork reversal (RFR). RuvA specifically binds to HJ cruciform DNA, conferring on it an open structure. The RuvB hexamer acts as an ATP-dependent pump, pulling dsDNA into and through the RuvAB complex. HJ branch migration allows RuvC to scan DNA until it finds its consensus sequence, where it cleaves and resolves the cruciform DNA. The protein is Holliday junction branch migration complex subunit RuvA of Streptomyces coelicolor (strain ATCC BAA-471 / A3(2) / M145).